Consider the following 570-residue polypeptide: Small ribosomal subunit protein bS1 (570 aa).

S1 motif domains follow at residues 52–116, 134–199, 220–288, 305–375, 392–462, and 479–548; these read GAIL…LSRE, GSIV…VSRR, GERR…LGLK, GKRV…LGLK, GLRV…LGVK, and GSDI…LSIK.

Belongs to the bacterial ribosomal protein bS1 family.

Its function is as follows. Binds mRNA; thus facilitating recognition of the initiation point. It is needed to translate mRNA with a short Shine-Dalgarno (SD) purine-rich sequence. The sequence is that of Small ribosomal subunit protein bS1 (rpsA) from Chlamydia muridarum (strain MoPn / Nigg).